Here is a 205-residue protein sequence, read N- to C-terminus: Isochorismatase domain-containing protein 2 (205 aa).

This sequence belongs to the isochorismatase family.

This chain is Isochorismatase domain-containing protein 2 (isoc2), found in Xenopus laevis (African clawed frog).